The sequence spans 267 residues: NAD kinase (267 aa).

The active-site Proton acceptor is D45. NAD(+) contacts are provided by residues 45 to 46 (DG), 123 to 124 (NE), R149, D151, A186, and N226.

Belongs to the NAD kinase family. A divalent metal cation serves as cofactor.

Its subcellular location is the cytoplasm. The enzyme catalyses NAD(+) + ATP = ADP + NADP(+) + H(+). Involved in the regulation of the intracellular balance of NAD and NADP, and is a key enzyme in the biosynthesis of NADP. Catalyzes specifically the phosphorylation on 2'-hydroxyl of the adenosine moiety of NAD to yield NADP. The protein is NAD kinase of Shouchella clausii (strain KSM-K16) (Alkalihalobacillus clausii).